Consider the following 353-residue polypeptide: MTIALGKLTKDEKDLFDTMDDWLRRDRFIFVGWSGLLLFPCAYFALGGWFTGTTFVTSWYTHGLASSYLEGCNFLTAAVSTPANSLAHSLLFLWGPEAQGDFTRWCQLGGLWTFVALHGAFGLIGFMLRQFELARSVQLRPYNAIAFSAPIAVFISVFFIYPLGQSGWFFAPSFGVAAIFRFILFFQGFHNWTLNPFHMMGVAGVLGAALLCAIHGATVENTLFEDGDGANTFRAFNPTQSEETYSMVTANRFWSQIFGVAFSNKRWLHFFMLFVPVTGLWMSALGVVGLALNLRAYDFVSQEIRAAEDPEFETFYTKNILLNEGIRAWMAAQDQPHENLIFPEEVLPRGNAL.

Thr-2 bears the N-acetylthreonine mark. A Phosphothreonine modification is found at Thr-2. Residues 41 to 61 form a helical membrane-spanning segment; the sequence is CAYFALGGWFTGTTFVTSWYT. His-118 contacts chlorophyll a. The helical transmembrane segment at 125–141 threads the bilayer; it reads GFMLRQFELARSVQLRP. Gln-130 and Asn-143 together coordinate pheophytin a. A helical transmembrane segment spans residues 153–166; the sequence is VFISVFFIYPLGQS. Chlorophyll a is bound at residue His-198. Residues 208 to 228 form a helical membrane-spanning segment; it reads AALLCAIHGATVENTLFEDGD. Positions 215 and 262 each coordinate a plastoquinone. His-215 serves as a coordination point for Fe cation. His-269 provides a ligand contact to Fe cation. Residues 279-295 traverse the membrane as a helical segment; sequence GLWMSALGVVGLALNLR.

Belongs to the reaction center PufL/M/PsbA/D family. PSII is composed of 1 copy each of membrane proteins PsbA, PsbB, PsbC, PsbD, PsbE, PsbF, PsbH, PsbI, PsbJ, PsbK, PsbL, PsbM, PsbT, PsbX, PsbY, PsbZ, Psb30/Ycf12, at least 3 peripheral proteins of the oxygen-evolving complex and a large number of cofactors. It forms dimeric complexes. It depends on The D1/D2 heterodimer binds P680, chlorophylls that are the primary electron donor of PSII, and subsequent electron acceptors. It shares a non-heme iron and each subunit binds pheophytin, quinone, additional chlorophylls, carotenoids and lipids. There is also a Cl(-1) ion associated with D1 and D2, which is required for oxygen evolution. The PSII complex binds additional chlorophylls, carotenoids and specific lipids. as a cofactor.

It localises to the plastid membrane. It catalyses the reaction 2 a plastoquinone + 4 hnu + 2 H2O = 2 a plastoquinol + O2. In terms of biological role, photosystem II (PSII) is a light-driven water:plastoquinone oxidoreductase that uses light energy to abstract electrons from H(2)O, generating O(2) and a proton gradient subsequently used for ATP formation. It consists of a core antenna complex that captures photons, and an electron transfer chain that converts photonic excitation into a charge separation. The D1/D2 (PsbA/PsbD) reaction center heterodimer binds P680, the primary electron donor of PSII as well as several subsequent electron acceptors. D2 is needed for assembly of a stable PSII complex. The protein is Photosystem II D2 protein of Cuscuta reflexa (Southern Asian dodder).